We begin with the raw amino-acid sequence, 118 residues long: Light-harvesting protein B-800/850 gamma chain (118 aa).

In terms of biological role, seems to be required for the LH-II stabilization. The chain is Light-harvesting protein B-800/850 gamma chain (pucE) from Rhodobacter capsulatus (Rhodopseudomonas capsulata).